Reading from the N-terminus, the 273-residue chain is Homeobox protein HMX2 (273 aa).

Residues 1-152 form a disordered region; that stretch reads MGSKEDAGKG…RQAGAAKKKT (152 aa). Positions 93 to 102 are enriched in gly residues; the sequence is KGSGGSGPGG. The segment covering 114 to 123 has biased composition (basic and acidic residues); the sequence is SDFKEEKERL. A DNA-binding region (homeobox) is located at residues 149–208; sequence KKKTRTVFSRSQVYQLESTFDMKRYLSSSERACLASSLQLTETQVKTWFQNRRNKWKRQL.

It belongs to the HMX homeobox family.

The protein localises to the nucleus. Its function is as follows. Transcription factor involved in specification of neuronal cell types and which is required for inner ear and hypothalamus development. This chain is Homeobox protein HMX2 (HMX2), found in Homo sapiens (Human).